The chain runs to 411 residues: Anaerobic sulfatase-maturating enzyme homolog AslB (411 aa).

One can recognise a Radical SAM core domain in the interval 3-250 (QQVPTRAFHV…LVAIFDHWIK (248 aa)). [4Fe-4S] cluster is bound by residues Cys-21 and Cys-25. Residue Tyr-27 coordinates S-adenosyl-L-methionine. Cys-28 lines the [4Fe-4S] cluster pocket. Positions 74, 129, and 141 each coordinate S-adenosyl-L-methionine. [4Fe-4S] cluster is bound by residues Cys-276, Cys-282, and Cys-297. Asp-298 serves as the catalytic Proton acceptor. Positions 339, 342, 348, 352, and 371 each coordinate [4Fe-4S] cluster.

It belongs to the radical SAM superfamily. Anaerobic sulfatase-maturating enzyme family. It depends on [4Fe-4S] cluster as a cofactor.

The protein is Anaerobic sulfatase-maturating enzyme homolog AslB (aslB) of Escherichia coli (strain K12).